The chain runs to 337 residues: Protein hairy (337 aa).

Residues 29-48 form an interaction with Topors region; the sequence is KSDRRSNKPIMEKRRRARIN. The 58-residue stretch at 31 to 88 folds into the bHLH domain; sequence DRRSNKPIMEKRRRARINNCLNELKTLILDATKKDPARHSKLEKADILEKTVKHLQEL. One can recognise an Orange domain in the interval 107–136; it reads FKAGFADCVNEVSRFPGIEPAQRRRLLQHL. Disordered stretches follow at residues 146-178 and 259-311; these read ELHQ…SQQG and MPQR…VIQR. Positions 263-301 are enriched in low complexity; that stretch reads TASTGSASSHSSAGYESAPGSSSSCSYAPPSPANSSYEP. The WRPW motif motif lies at 334–337; it reads WRPW.

Transcription repression requires formation of a complex with a corepressor protein (Groucho). Interacts with gro (via WPRW motif) and Topors. In terms of processing, ubiquitinated by Topors.

It localises to the nucleus. In terms of biological role, pair-rule protein that regulates embryonic segmentation and adult bristle patterning. Transcriptional repressor of genes that require a bHLH protein for their transcription (e.g. ftz). The protein is Protein hairy of Drosophila melanogaster (Fruit fly).